Consider the following 268-residue polypeptide: 4-hydroxy-tetrahydrodipicolinate reductase (268 aa).

NAD(+) contacts are provided by residues 8-13 (GACGKM), Asp-34, 95-97 (GTT), and 121-124 (APNF). Catalysis depends on His-151, which acts as the Proton donor/acceptor. Residue His-152 participates in (S)-2,3,4,5-tetrahydrodipicolinate binding. Lys-155 serves as the catalytic Proton donor. Residue 161-162 (GT) participates in (S)-2,3,4,5-tetrahydrodipicolinate binding.

Belongs to the DapB family.

It localises to the cytoplasm. It catalyses the reaction (S)-2,3,4,5-tetrahydrodipicolinate + NAD(+) + H2O = (2S,4S)-4-hydroxy-2,3,4,5-tetrahydrodipicolinate + NADH + H(+). The catalysed reaction is (S)-2,3,4,5-tetrahydrodipicolinate + NADP(+) + H2O = (2S,4S)-4-hydroxy-2,3,4,5-tetrahydrodipicolinate + NADPH + H(+). It functions in the pathway amino-acid biosynthesis; L-lysine biosynthesis via DAP pathway; (S)-tetrahydrodipicolinate from L-aspartate: step 4/4. Its function is as follows. Catalyzes the conversion of 4-hydroxy-tetrahydrodipicolinate (HTPA) to tetrahydrodipicolinate. The polypeptide is 4-hydroxy-tetrahydrodipicolinate reductase (Dictyoglomus turgidum (strain DSM 6724 / Z-1310)).